Reading from the N-terminus, the 202-residue chain is FMN-dependent NADH:quinone oxidoreductase (202 aa).

FMN is bound by residues Ser-10, 16 to 18 (SAS), and 96 to 99 (MWNF).

It belongs to the azoreductase type 1 family. As to quaternary structure, homodimer. FMN serves as cofactor.

The enzyme catalyses 2 a quinone + NADH + H(+) = 2 a 1,4-benzosemiquinone + NAD(+). It carries out the reaction N,N-dimethyl-1,4-phenylenediamine + anthranilate + 2 NAD(+) = 2-(4-dimethylaminophenyl)diazenylbenzoate + 2 NADH + 2 H(+). Functionally, quinone reductase that provides resistance to thiol-specific stress caused by electrophilic quinones. Its function is as follows. Also exhibits azoreductase activity. Catalyzes the reductive cleavage of the azo bond in aromatic azo compounds to the corresponding amines. The sequence is that of FMN-dependent NADH:quinone oxidoreductase from Beijerinckia indica subsp. indica (strain ATCC 9039 / DSM 1715 / NCIMB 8712).